A 358-amino-acid chain; its full sequence is Aromatic amino acid aminotransferase (358 aa).

N6-(pyridoxal phosphate)lysine is present on Lys-219.

This sequence belongs to the class-II pyridoxal-phosphate-dependent aminotransferase family. In terms of assembly, homodimer. The cofactor is pyridoxal 5'-phosphate.

The catalysed reaction is an aromatic L-alpha-amino acid + 2-oxoglutarate = an aromatic oxo-acid + L-glutamate. Functionally, aminotransferase that catalyzes the conversion of aromatic amino acids and 2-oxoglutarate into corresponding aromatic oxo acids and L-glutamate. The chain is Aromatic amino acid aminotransferase from Nocardia farcinica (strain IFM 10152).